The chain runs to 291 residues: 4-hydroxy-tetrahydrodipicolinate synthase (291 aa).

Residue T44 coordinates pyruvate. Y132 acts as the Proton donor/acceptor in catalysis. K160 acts as the Schiff-base intermediate with substrate in catalysis. A pyruvate-binding site is contributed by V202.

The protein belongs to the DapA family. Homotetramer; dimer of dimers.

The protein localises to the cytoplasm. It catalyses the reaction L-aspartate 4-semialdehyde + pyruvate = (2S,4S)-4-hydroxy-2,3,4,5-tetrahydrodipicolinate + H2O + H(+). The protein operates within amino-acid biosynthesis; L-lysine biosynthesis via DAP pathway; (S)-tetrahydrodipicolinate from L-aspartate: step 3/4. Catalyzes the condensation of (S)-aspartate-beta-semialdehyde [(S)-ASA] and pyruvate to 4-hydroxy-tetrahydrodipicolinate (HTPA). In Clostridium perfringens (strain 13 / Type A), this protein is 4-hydroxy-tetrahydrodipicolinate synthase.